The following is a 210-amino-acid chain: Thymidylate kinase (210 aa).

Residue 10-17 (GLEGAGKT) coordinates ATP.

This sequence belongs to the thymidylate kinase family.

It carries out the reaction dTMP + ATP = dTDP + ADP. In terms of biological role, phosphorylation of dTMP to form dTDP in both de novo and salvage pathways of dTTP synthesis. The protein is Thymidylate kinase of Actinobacillus succinogenes (strain ATCC 55618 / DSM 22257 / CCUG 43843 / 130Z).